The sequence spans 351 residues: Nicotinate-nucleotide--dimethylbenzimidazole phosphoribosyltransferase (351 aa).

Catalysis depends on E317, which acts as the Proton acceptor.

The protein belongs to the CobT family.

It carries out the reaction 5,6-dimethylbenzimidazole + nicotinate beta-D-ribonucleotide = alpha-ribazole 5'-phosphate + nicotinate + H(+). Its pathway is nucleoside biosynthesis; alpha-ribazole biosynthesis; alpha-ribazole from 5,6-dimethylbenzimidazole: step 1/2. Catalyzes the synthesis of alpha-ribazole-5'-phosphate from nicotinate mononucleotide (NAMN) and 5,6-dimethylbenzimidazole (DMB). In Pseudomonas aeruginosa (strain ATCC 15692 / DSM 22644 / CIP 104116 / JCM 14847 / LMG 12228 / 1C / PRS 101 / PAO1), this protein is Nicotinate-nucleotide--dimethylbenzimidazole phosphoribosyltransferase.